We begin with the raw amino-acid sequence, 217 residues long: Cytochrome c biogenesis ATP-binding export protein CcmA (217 aa).

An ABC transporter domain is found at 16–214; it reads LVLEQLSCER…AHGQAEVTEG (199 aa). Position 48 to 55 (48 to 55) interacts with ATP; sequence GANGAGKT.

It belongs to the ABC transporter superfamily. CcmA exporter (TC 3.A.1.107) family. The complex is composed of two ATP-binding proteins (CcmA) and two transmembrane proteins (CcmB).

The protein localises to the cell inner membrane. It carries out the reaction heme b(in) + ATP + H2O = heme b(out) + ADP + phosphate + H(+). Part of the ABC transporter complex CcmAB involved in the biogenesis of c-type cytochromes; once thought to export heme, this seems not to be the case, but its exact role is uncertain. Responsible for energy coupling to the transport system. The polypeptide is Cytochrome c biogenesis ATP-binding export protein CcmA (Alcanivorax borkumensis (strain ATCC 700651 / DSM 11573 / NCIMB 13689 / SK2)).